A 477-amino-acid polypeptide reads, in one-letter code: tRNA-2-methylthio-N(6)-dimethylallyladenosine synthase (477 aa).

An MTTase N-terminal domain is found at 3 to 120 (KKLHIKTWGC…LPAMIKQVQE (118 aa)). Cys12, Cys49, Cys83, Cys157, Cys161, and Cys164 together coordinate [4Fe-4S] cluster. Positions 143–375 (RAEGATAFVS…QHVINNQSMQ (233 aa)) constitute a Radical SAM core domain. The region spanning 378–441 (RAMLGSTQRI…PNSLRGRFIR (64 aa)) is the TRAM domain.

Belongs to the methylthiotransferase family. MiaB subfamily. As to quaternary structure, monomer. Requires [4Fe-4S] cluster as cofactor.

Its subcellular location is the cytoplasm. The enzyme catalyses N(6)-dimethylallyladenosine(37) in tRNA + (sulfur carrier)-SH + AH2 + 2 S-adenosyl-L-methionine = 2-methylsulfanyl-N(6)-dimethylallyladenosine(37) in tRNA + (sulfur carrier)-H + 5'-deoxyadenosine + L-methionine + A + S-adenosyl-L-homocysteine + 2 H(+). In terms of biological role, catalyzes the methylthiolation of N6-(dimethylallyl)adenosine (i(6)A), leading to the formation of 2-methylthio-N6-(dimethylallyl)adenosine (ms(2)i(6)A) at position 37 in tRNAs that read codons beginning with uridine. The chain is tRNA-2-methylthio-N(6)-dimethylallyladenosine synthase from Aeromonas salmonicida (strain A449).